Here is a 126-residue protein sequence, read N- to C-terminus: Small ribosomal subunit protein uS12 (126 aa).

The residue at position 89 (Asp89) is a 3-methylthioaspartic acid. A disordered region spans residues 99 to 126 (RGSLDTSGVNDRKQGRSKYGTKKPKDKK). Residues 113 to 126 (GRSKYGTKKPKDKK) show a composition bias toward basic residues.

Belongs to the universal ribosomal protein uS12 family. In terms of assembly, part of the 30S ribosomal subunit. Contacts proteins S8 and S17. May interact with IF1 in the 30S initiation complex.

With S4 and S5 plays an important role in translational accuracy. In terms of biological role, interacts with and stabilizes bases of the 16S rRNA that are involved in tRNA selection in the A site and with the mRNA backbone. Located at the interface of the 30S and 50S subunits, it traverses the body of the 30S subunit contacting proteins on the other side and probably holding the rRNA structure together. The combined cluster of proteins S8, S12 and S17 appears to hold together the shoulder and platform of the 30S subunit. In Legionella pneumophila (strain Paris), this protein is Small ribosomal subunit protein uS12.